The primary structure comprises 312 residues: Mycothiol acetyltransferase (312 aa).

N-acetyltransferase domains lie at 8–136 (PIIR…LPMP) and 149–301 (LRLD…HQDH). E38 lines the 1D-myo-inositol 2-(L-cysteinylamino)-2-deoxy-alpha-D-glucopyranoside pocket. Residues 77–79 (LMV) and 85–90 (RQGIAT) each bind acetyl-CoA. The 1D-myo-inositol 2-(L-cysteinylamino)-2-deoxy-alpha-D-glucopyranoside site is built by E175, K215, and E226. Acetyl-CoA-binding positions include 230-232 (LGV) and 237-243 (EGKGVGR). Y264 contacts 1D-myo-inositol 2-(L-cysteinylamino)-2-deoxy-alpha-D-glucopyranoside. 269–274 (NERVVH) contributes to the acetyl-CoA binding site. Residues 292 to 312 (PAKPARHQDHGRQSSPQERDA) form a disordered region. Positions 297–312 (RHQDHGRQSSPQERDA) are enriched in basic and acidic residues.

It belongs to the acetyltransferase family. MshD subfamily. Monomer.

It carries out the reaction 1D-myo-inositol 2-(L-cysteinylamino)-2-deoxy-alpha-D-glucopyranoside + acetyl-CoA = mycothiol + CoA + H(+). Functionally, catalyzes the transfer of acetyl from acetyl-CoA to desacetylmycothiol (Cys-GlcN-Ins) to form mycothiol. The protein is Mycothiol acetyltransferase of Propionibacterium freudenreichii subsp. shermanii (strain ATCC 9614 / DSM 4902 / CIP 103027 / NCIMB 8099 / CIRM-BIA1).